The chain runs to 141 residues: Nucleoside diphosphate kinase (141 aa).

6 residues coordinate ATP: lysine 11, phenylalanine 59, arginine 87, threonine 93, arginine 104, and asparagine 114. Histidine 117 acts as the Pros-phosphohistidine intermediate in catalysis.

The protein belongs to the NDK family. Homotetramer. Mg(2+) serves as cofactor.

It is found in the cytoplasm. It catalyses the reaction a 2'-deoxyribonucleoside 5'-diphosphate + ATP = a 2'-deoxyribonucleoside 5'-triphosphate + ADP. It carries out the reaction a ribonucleoside 5'-diphosphate + ATP = a ribonucleoside 5'-triphosphate + ADP. Its function is as follows. Major role in the synthesis of nucleoside triphosphates other than ATP. The ATP gamma phosphate is transferred to the NDP beta phosphate via a ping-pong mechanism, using a phosphorylated active-site intermediate. In Xylella fastidiosa (strain M23), this protein is Nucleoside diphosphate kinase.